Consider the following 555-residue polypeptide: MAIEGGERTCGVHELICIRKVSPEAVGFLSAVGVFIILMLLLFLYINKKFCFENVGGFPDLGSEYSTRKNSQDKIYNSYMDKDEHGSSSESEDEALGKYHEALSRTHNSRLPLADSRQRNYAWETRQKYSPLSAEYDGYSSEASIDEGNCIQRMRRTPPLDELQPPPYQDDSGSPHLSCTPSEIGDSKCEFSHCSNSPRCSYNKCPSEGSTGHEIESFHNKGYEEDVPSDSTAVLSPEDMSAQGSSSQLPKPFDPEPEAKYGTLDVTFDYDSQEQKLLVTVTAVTDIPTYNRTGGNSWQVHLVLLPIKKQRAKTSIQRGPCPVFTETFKFNHVESEMIGNYAVRFRLYGVHRMKKEKIVGEKIFYLTKLNLQGKMSLPVILEPSYNHSGCDSQMSVSEMSCSESTSSCQSLEHGSVPEILIGLLYNATTGRLSAEVIKGSHFKNLAANRPPNTYVKLTLLNSMGQEMSKCKTSIRRGQPNPVYKETFVFQVALFQLSDVTLILSVYNKRSMKRKEMIGWISLGLNSSGEEELNHWTEMKESKGQQVCRWHALLES.

The Extracellular segment spans residues Met-1–Glu-24. The chain crosses the membrane as a helical; Signal-anchor for type III membrane protein span at residues Ala-25 to Asn-47. Topologically, residues Lys-48–Ser-555 are cytoplasmic. 2 disordered regions span residues Thr-157–Cys-179 and Gly-222–Pro-257. C2 domains follow at residues Lys-260 to Val-379 and Ser-415 to His-550.

The protein belongs to the synaptotagmin family. As to quaternary structure, homodimer. Can also form heterodimers. Highly expressed in fetal and adult brain tissue.

It localises to the membrane. Functionally, may be involved in the trafficking and exocytosis of secretory vesicles in non-neuronal tissues. Is Ca(2+)-independent. This is Synaptotagmin-14 (SYT14) from Homo sapiens (Human).